The sequence spans 509 residues: Thymus-specific serine protease (509 aa).

Positions 1–22 (MAVKAPWLGFLLLVSLWGLSTP) are cleaved as a signal peptide. N-linked (GlcNAc...) asparagine glycans are attached at residues asparagine 69 and asparagine 171. Serine 184 (charge relay system) is an active-site residue. N-linked (GlcNAc...) asparagine glycosylation occurs at asparagine 320. Residues aspartate 446 and histidine 471 each act as charge relay system in the active site.

Belongs to the peptidase S28 family. In terms of tissue distribution, expressed predominantly in cortical thymic epithelial cells, with highest expression around vessels and the thymic capsule.

Its subcellular location is the cytoplasmic vesicle. Its function is as follows. Protease that may play a role in T-cell development. The chain is Thymus-specific serine protease (Prss16) from Mus musculus (Mouse).